Consider the following 378-residue polypeptide: MTDSPTLALAKDLISRQSVTPEDAGCQDLMIERLKALGFEIEVMVFEDTTNFWARRGTEAPLFAFAGHTDVVPAGPIEQWNTKPFEPTIIDGFLHGRGAADMKGSLASMVVAVEQFIAKHPDHTGSIGFLITSDEEGPFINGTVRVVEALMARGENIDMCIVGEPSSTEYVGDVVKNGRRGSITGDLTIKGTQGHVAYPHLANNPVHSSLLAINELATTEWDKGNDYFPPTSFQIPNVSAGTGASNVIPGEFNVQFNLRFSTELNNDIIVERITNTLDKYDFEYDLKWTFNGDPFLTDAGSLLDAIVDAVGHVNDVKPALLTTGGTSDGRFIARMKGQVVELGPVNATIHKVNECVKVADLEKLTDMYERTLVNLFAK.

His-68 serves as a coordination point for Zn(2+). Asp-70 is an active-site residue. Residue Asp-101 participates in Zn(2+) binding. Glu-135 functions as the Proton acceptor in the catalytic mechanism. Zn(2+) contacts are provided by Glu-136, Glu-164, and His-350.

The protein belongs to the peptidase M20A family. DapE subfamily. As to quaternary structure, homodimer. Zn(2+) serves as cofactor. It depends on Co(2+) as a cofactor.

The enzyme catalyses N-succinyl-(2S,6S)-2,6-diaminopimelate + H2O = (2S,6S)-2,6-diaminopimelate + succinate. The protein operates within amino-acid biosynthesis; L-lysine biosynthesis via DAP pathway; LL-2,6-diaminopimelate from (S)-tetrahydrodipicolinate (succinylase route): step 3/3. Catalyzes the hydrolysis of N-succinyl-L,L-diaminopimelic acid (SDAP), forming succinate and LL-2,6-diaminopimelate (DAP), an intermediate involved in the bacterial biosynthesis of lysine and meso-diaminopimelic acid, an essential component of bacterial cell walls. The chain is Succinyl-diaminopimelate desuccinylase from Vibrio atlanticus (strain LGP32) (Vibrio splendidus (strain Mel32)).